The following is a 384-amino-acid chain: Carbazole 1,9a-dioxygenase, terminal oxygenase component CarAa (384 aa).

One can recognise a Rieske domain in the interval 29–135; that stretch reads WYPVMFSKEI…VQEAKGCVFI (107 aa). 4 residues coordinate [2Fe-2S] cluster: Cys-69, His-71, Cys-90, and His-93.

As to quaternary structure, homotrimer. Carbazole 1,9a-dioxygenase complex consists of a terminal oxygenase component CarAa, a ferredoxin reductase component CarAd and a ferredoxin component CarAc. It depends on [2Fe-2S] cluster as a cofactor.

It carries out the reaction 9H-carbazole + NADH + O2 + H(+) = 2'-aminobiphenyl-2,3-diol + NAD(+). It catalyses the reaction 9H-carbazole + NADPH + O2 + H(+) = 2'-aminobiphenyl-2,3-diol + NADP(+). Its function is as follows. Part of the multicomponent carbazole 1,9a-dioxygenase (CARDO), that converts carbazole (CAR) into 2-aminobiphenyl-2,3-diol. Catalyzes the dioxygenation at the angular (C-9a) and adjacent (C-1) positions of carbazole to yield a highly unstable cis-hydrodiol intermediate which is spontaneously converted to 2-aminobiphenyl-2,3-diol. It is also able to attack the angular position adjacent of hetero atom of heterocyclic aromatic compounds such as polychlorinated dibenzo-p-dioxin (DD) and dibenzofuran (DBF). It was also shown that CARDO has the ability to metabolize biphenyl and polycyclic aromatic hydrocarbons, such as naphthalene and phenanthrene. This Metapseudomonas resinovorans (Pseudomonas resinovorans) protein is Carbazole 1,9a-dioxygenase, terminal oxygenase component CarAa (carAa).